We begin with the raw amino-acid sequence, 290 residues long: Polyamine aminopropyltransferase (290 aa).

Residues glutamine 5–glutamate 238 form the PABS domain. Position 33 (glutamine 33) interacts with S-methyl-5'-thioadenosine. The spermidine site is built by histidine 64 and aspartate 88. Residues glutamate 108 and aspartate 140–glycine 141 each bind S-methyl-5'-thioadenosine. Aspartate 158 serves as the catalytic Proton acceptor. Aspartate 158–aspartate 161 serves as a coordination point for spermidine. Proline 165 provides a ligand contact to S-methyl-5'-thioadenosine.

Belongs to the spermidine/spermine synthase family. As to quaternary structure, homodimer or homotetramer.

The protein localises to the cytoplasm. The enzyme catalyses S-adenosyl 3-(methylsulfanyl)propylamine + putrescine = S-methyl-5'-thioadenosine + spermidine + H(+). The protein operates within amine and polyamine biosynthesis; spermidine biosynthesis; spermidine from putrescine: step 1/1. In terms of biological role, catalyzes the irreversible transfer of a propylamine group from the amino donor S-adenosylmethioninamine (decarboxy-AdoMet) to putrescine (1,4-diaminobutane) to yield spermidine. In Hamiltonella defensa subsp. Acyrthosiphon pisum (strain 5AT), this protein is Polyamine aminopropyltransferase.